Here is a 269-residue protein sequence, read N- to C-terminus: MILETIGQLLIKVREENPLVHNITNVVVTNFTANGLLALGASPVMAYAKQEVADMAKIAGALVLNIGTLNEHEIEAMLIAGKSANQHGVPVLFDPVGAGATSYRTETSQRLAQELDLAFIRGNAAEVANVIGERWEIKGVDAKEAGGDVEDLARAAAKKLRTIVAITGKVDVISDGEKTYSIHNGHPILTKVTGTGCLLTSVMGAFAAIAKDKLIAGAAALVCYGVAAQLAAEKAAEVGPGSFQIEFLNALHNLTAEDVRRLGYIEKRE.

A substrate-binding site is contributed by methionine 45. Residues arginine 121 and threonine 167 each contribute to the ATP site. A substrate-binding site is contributed by glycine 194.

It belongs to the Thz kinase family. Mg(2+) is required as a cofactor.

It carries out the reaction 5-(2-hydroxyethyl)-4-methylthiazole + ATP = 4-methyl-5-(2-phosphooxyethyl)-thiazole + ADP + H(+). The protein operates within cofactor biosynthesis; thiamine diphosphate biosynthesis; 4-methyl-5-(2-phosphoethyl)-thiazole from 5-(2-hydroxyethyl)-4-methylthiazole: step 1/1. In terms of biological role, catalyzes the phosphorylation of the hydroxyl group of 4-methyl-5-beta-hydroxyethylthiazole (THZ). The sequence is that of Hydroxyethylthiazole kinase from Brevibacillus brevis (strain 47 / JCM 6285 / NBRC 100599).